The sequence spans 684 residues: Threonine--tRNA ligase (684 aa).

The TGS domain maps to 1-60 (MSISITLHRSGTSRTQQVDTTTTGLDLFGSDRAVVAMRVDGNLVDLQRELHDGAEVEPVE). The tract at residues 256 to 567 (DHRKLGAELD…LTEHYAGAFP (312 aa)) is catalytic. Zn(2+) is bound by residues cysteine 361, histidine 412, and histidine 544.

The protein belongs to the class-II aminoacyl-tRNA synthetase family. In terms of assembly, homodimer. The cofactor is Zn(2+).

It is found in the cytoplasm. The enzyme catalyses tRNA(Thr) + L-threonine + ATP = L-threonyl-tRNA(Thr) + AMP + diphosphate + H(+). Functionally, catalyzes the attachment of threonine to tRNA(Thr) in a two-step reaction: L-threonine is first activated by ATP to form Thr-AMP and then transferred to the acceptor end of tRNA(Thr). Also edits incorrectly charged L-seryl-tRNA(Thr). The chain is Threonine--tRNA ligase from Cutibacterium acnes (strain DSM 16379 / KPA171202) (Propionibacterium acnes).